The chain runs to 176 residues: MTTIVSVRRNGHVVIAGDGQATLGNTVMKGNVKKVRRLYNDKVIAGFAGGTADAFTLFELFERKLEMHQGHLVKAAVELAKDWRTDRMLRKLEALLAVADETASLIITGNGDVVQPENDLIAIGSGGPYARAAARALLENTELGAREIAEKALDIAGDICIYTNHFHTIEELTAKA.

Thr-2 is an active-site residue. Residues Gly-157, Cys-160, and Thr-163 each contribute to the Na(+) site.

The protein belongs to the peptidase T1B family. HslV subfamily. In terms of assembly, a double ring-shaped homohexamer of HslV is capped on each side by a ring-shaped HslU homohexamer. The assembly of the HslU/HslV complex is dependent on binding of ATP.

It localises to the cytoplasm. The enzyme catalyses ATP-dependent cleavage of peptide bonds with broad specificity.. Its activity is regulated as follows. Allosterically activated by HslU binding. Functionally, protease subunit of a proteasome-like degradation complex believed to be a general protein degrading machinery. The protein is ATP-dependent protease subunit HslV of Salmonella gallinarum (strain 287/91 / NCTC 13346).